The sequence spans 287 residues: ATP phosphoribosyltransferase (287 aa).

Belongs to the ATP phosphoribosyltransferase family. Long subfamily. The cofactor is Mg(2+).

It localises to the cytoplasm. It carries out the reaction 1-(5-phospho-beta-D-ribosyl)-ATP + diphosphate = 5-phospho-alpha-D-ribose 1-diphosphate + ATP. The protein operates within amino-acid biosynthesis; L-histidine biosynthesis; L-histidine from 5-phospho-alpha-D-ribose 1-diphosphate: step 1/9. Feedback inhibited by histidine. Catalyzes the condensation of ATP and 5-phosphoribose 1-diphosphate to form N'-(5'-phosphoribosyl)-ATP (PR-ATP). Has a crucial role in the pathway because the rate of histidine biosynthesis seems to be controlled primarily by regulation of HisG enzymatic activity. This is ATP phosphoribosyltransferase (hisG) from Methanothermobacter thermautotrophicus (strain ATCC 29096 / DSM 1053 / JCM 10044 / NBRC 100330 / Delta H) (Methanobacterium thermoautotrophicum).